Consider the following 795-residue polypeptide: Lon protease (795 aa).

A Lon N-terminal domain is found at 7-213; that stretch reads SQILVVRGQV…KIIQAGIEDL (207 aa). An ATP-binding site is contributed by 379-386; it reads GPPGVGKS. One can recognise a Lon proteolytic domain in the interval 615 to 795; that stretch reads VSLPGIVNGM…YSDIYNKLFS (181 aa). Active-site residues include serine 702 and lysine 745.

The protein belongs to the peptidase S16 family. In terms of assembly, homohexamer. Organized in a ring with a central cavity.

Its subcellular location is the cytoplasm. It catalyses the reaction Hydrolysis of proteins in presence of ATP.. ATP-dependent serine protease that mediates the selective degradation of mutant and abnormal proteins as well as certain short-lived regulatory proteins. Required for cellular homeostasis and for survival from DNA damage and developmental changes induced by stress. Degrades polypeptides processively to yield small peptide fragments that are 5 to 10 amino acids long. Binds to DNA in a double-stranded, site-specific manner. The protein is Lon protease of Mycoplasma genitalium (strain ATCC 33530 / DSM 19775 / NCTC 10195 / G37) (Mycoplasmoides genitalium).